A 261-amino-acid chain; its full sequence is uncharacterized protein (261 aa).

The protein belongs to the FwdC/FmdC family.

This is an uncharacterized protein from Methanocaldococcus jannaschii (strain ATCC 43067 / DSM 2661 / JAL-1 / JCM 10045 / NBRC 100440) (Methanococcus jannaschii).